Here is a 133-residue protein sequence, read N- to C-terminus: Agouti-signaling protein (133 aa).

Positions 1 to 22 are cleaved as a signal peptide; sequence MDVSRLLLATLLVCLCFLTAYS. N-linked (GlcNAc...) asparagine glycosylation occurs at asparagine 39. The segment at 56–95 is disordered; sequence NKKSKKISRNEAEKKKRPSKRKAPMKNVARTRPPPPTPCV. The span at 70 to 79 shows a compositional bias: basic residues; that stretch reads KKRPSKRKAP. 5 disulfide bridges follow: cysteine 94-cysteine 109, cysteine 101-cysteine 115, cysteine 108-cysteine 126, cysteine 112-cysteine 133, and cysteine 117-cysteine 124. One can recognise an Agouti domain in the interval 94-133; it reads CVATRDSCKPPAPACCDPCAFCQCRFFRSACSCRVLNPTC.

It is found in the secreted. In terms of biological role, involved in the regulation of melanogenesis. The binding of ASP to MC1R precludes alpha-MSH initiated signaling and thus blocks production of cAMP, leading to a down-regulation of eumelanogenesis (brown/black pigment) and thus increasing synthesis of pheomelanin (yellow/red pigment). In Bos taurus (Bovine), this protein is Agouti-signaling protein (ASIP).